The sequence spans 118 residues: Large ribosomal subunit protein uL24 (118 aa).

This sequence belongs to the universal ribosomal protein uL24 family. As to quaternary structure, part of the 50S ribosomal subunit.

In terms of biological role, one of two assembly initiator proteins, it binds directly to the 5'-end of the 23S rRNA, where it nucleates assembly of the 50S subunit. Its function is as follows. One of the proteins that surrounds the polypeptide exit tunnel on the outside of the subunit. This chain is Large ribosomal subunit protein uL24, found in Synechococcus sp. (strain WH7803).